The following is a 318-amino-acid chain: Glycine--tRNA ligase alpha subunit (318 aa).

This sequence belongs to the class-II aminoacyl-tRNA synthetase family. Tetramer of two alpha and two beta subunits.

It is found in the cytoplasm. It catalyses the reaction tRNA(Gly) + glycine + ATP = glycyl-tRNA(Gly) + AMP + diphosphate. The protein is Glycine--tRNA ligase alpha subunit of Saccharophagus degradans (strain 2-40 / ATCC 43961 / DSM 17024).